A 427-amino-acid chain; its full sequence is Outer capsid protein P8 (427 aa).

This sequence belongs to the phytoreovirus outer capsid protein P8 family. Homotrimer. Homomultimer.

Its subcellular location is the virion. The protein localises to the host cytoplasm. Functionally, capsid protein which self-assembles to form the outer icosahedral capsid with a T=13 symmetry, about 70 nm in diameter and consisting of 780 molecules capsid proteins. This is Outer capsid protein P8 from Catharanthus roseus (Madagascar periwinkle).